A 208-amino-acid chain; its full sequence is Guanylate kinase (208 aa).

Positions 4-182 constitute a Guanylate kinase-like domain; it reads GQLYIISAPS…ALEELKSVFR (179 aa). 11 to 18 lines the ATP pocket; sequence APSGAGKT.

The protein belongs to the guanylate kinase family.

Its subcellular location is the cytoplasm. The catalysed reaction is GMP + ATP = GDP + ADP. Its function is as follows. Essential for recycling GMP and indirectly, cGMP. The polypeptide is Guanylate kinase (Hahella chejuensis (strain KCTC 2396)).